A 339-amino-acid polypeptide reads, in one-letter code: tRNA-specific 2-thiouridylase MnmA (339 aa).

ATP-binding positions include 6-13 (AMSGGVDS) and Met-32. Residue Cys-92 is the Nucleophile of the active site. Cys-92 and Cys-186 are disulfide-bonded. Position 116 (Gly-116) interacts with ATP. Residues 134–136 (KDQ) form an interaction with tRNA region. Cys-186 serves as the catalytic Cysteine persulfide intermediate. Residues 288-289 (RY) are interaction with tRNA.

The protein belongs to the MnmA/TRMU family.

Its subcellular location is the cytoplasm. It catalyses the reaction S-sulfanyl-L-cysteinyl-[protein] + uridine(34) in tRNA + AH2 + ATP = 2-thiouridine(34) in tRNA + L-cysteinyl-[protein] + A + AMP + diphosphate + H(+). In terms of biological role, catalyzes the 2-thiolation of uridine at the wobble position (U34) of tRNA, leading to the formation of s(2)U34. The protein is tRNA-specific 2-thiouridylase MnmA of Campylobacter curvus (strain 525.92).